We begin with the raw amino-acid sequence, 376 residues long: 23S rRNA (uracil(747)-C(5))-methyltransferase RlmC (376 aa).

[4Fe-4S] cluster contacts are provided by Cys-3, Cys-11, Cys-14, and Cys-88. S-adenosyl-L-methionine-binding residues include Gln-213, Phe-242, Glu-263, and Asn-308. The active-site Nucleophile is the Cys-335.

It belongs to the class I-like SAM-binding methyltransferase superfamily. RNA M5U methyltransferase family. RlmC subfamily.

The catalysed reaction is uridine(747) in 23S rRNA + S-adenosyl-L-methionine = 5-methyluridine(747) in 23S rRNA + S-adenosyl-L-homocysteine + H(+). Catalyzes the formation of 5-methyl-uridine at position 747 (m5U747) in 23S rRNA. This is 23S rRNA (uracil(747)-C(5))-methyltransferase RlmC from Vibrio vulnificus (strain YJ016).